A 709-amino-acid polypeptide reads, in one-letter code: Leucine-rich repeat-containing protein 4B (709 aa).

An N-terminal signal peptide occupies residues 1–38; that stretch reads MAQAHIQGSPCPLLPPGRMSWPQGALLLLWLFSPPLRA. The LRRNT domain occupies 50–88; that stretch reads GGGSPPATSCPAACSCSNQASRVICTRRELAEVPASIPV. LRR repeat units lie at residues 89–110, 113–134, 137–158, 161–182, 185–207, 210–231, 232–253, 256–277, and 280–301; these read NTRY…TFKH, HLEI…AFNG, SLNT…AFEY, KLRE…AFNR, SLRR…AFEG, NLRY…TALV, RLEE…SFQG, SLRK…AFDD, and SLEE…LFTP. The 53-residue stretch at 313-365 folds into the LRRCT domain; sequence NPWHCNCDVLWLSWWLKETVPSNTTCCARCHAPAGLKGRYIGELDQSHFTCYA. Positions 366 to 454 constitute an Ig-like C2-type domain; it reads PVIVEPPTDL…GNTTASATLN (89 aa). N-linked (GlcNAc...) asparagine glycans are attached at residues Asn-376, Asn-402, Asn-424, Asn-427, and Asn-446. The cysteines at positions 387 and 438 are disulfide-linked. A disordered region spans residues 496-552; that stretch reads TQPGEEAQQPRGTEKEPPGPTTDGAWGGGRPDAAAPASASTTAPAPRSSRPTEKAFT. Positions 528 to 544 are enriched in low complexity; the sequence is AAAPASASTTAPAPRSS. Residues 575-595 form a helical membrane-spanning segment; the sequence is IIIGCFVAITFMAAVMLVAFY. Ser-689 bears the Phosphoserine mark.

As to quaternary structure, interacts with PTPRF. Interacts with DLG4. In terms of processing, N-glycosylated. O-glycosylated; contains sialic acid. As to expression, mainly expressed in the brain. Widespread distribution in various brain regions (at protein level). Detected both embryonically and postnatally with stronger expression in postnatal stages.

The protein localises to the membrane. It is found in the presynaptic cell membrane. Its function is as follows. Synaptic adhesion protein. Regulates the formation of excitatory synapses. The trans-synaptic adhesion between LRRC4B and PTPRF regulates the formation of excitatory synapses in a bidirectional manner. This Rattus norvegicus (Rat) protein is Leucine-rich repeat-containing protein 4B (Lrrc4b).